Reading from the N-terminus, the 249-residue chain is Large ribosomal subunit protein uL4 (249 aa).

The protein belongs to the universal ribosomal protein uL4 family. As to quaternary structure, part of the 50S ribosomal subunit.

In terms of biological role, one of the primary rRNA binding proteins, this protein initially binds near the 5'-end of the 23S rRNA. It is important during the early stages of 50S assembly. It makes multiple contacts with different domains of the 23S rRNA in the assembled 50S subunit and ribosome. Forms part of the polypeptide exit tunnel. The protein is Large ribosomal subunit protein uL4 of Methanospirillum hungatei JF-1 (strain ATCC 27890 / DSM 864 / NBRC 100397 / JF-1).